A 160-amino-acid chain; its full sequence is Seed allergenic protein RA5 (160 aa).

The first 26 residues, M1 to A26, serve as a signal peptide directing secretion. Intrachain disulfides connect C42–C92, C56–C80, C64–C124, C81–C140, and C94–C152.

It belongs to the protease inhibitor I6 (cereal trypsin/alpha-amylase inhibitor) family. Post-translationally, five disulfide bonds are present.

The protein localises to the secreted. Functionally, seed storage protein. The protein is Seed allergenic protein RA5 (RA5) of Oryza sativa subsp. japonica (Rice).